Here is a 362-residue protein sequence, read N- to C-terminus: Chromobox protein homolog 8 (362 aa).

Positions 11–69 (FAAEALLKRRIRKGRMEYLVKWKGWSQKYSTWEPEENILDARLLAAFEEREREMELYGP) constitute a Chromo domain. Residues 90 to 100 (KTYEFRSDSTR) show a composition bias toward basic and acidic residues. The disordered stretch occupies residues 90–197 (KTYEFRSDST…LGEPSAGLGE (108 aa)). Ser-110 is subject to Phosphoserine. Basic and acidic residues predominate over residues 142–162 (DPPRDRDRERDRGTSRVDDKP). Phosphoserine occurs at positions 164 and 229. Tyr-234 bears the Phosphotyrosine mark. Phosphoserine occurs at positions 238, 284, 305, and 325.

Component of a PRC1-like complex. Interacts with RING1, RNF2, PCGF1, PCGF2, PCGF3, BMI1, PCGF5, PCGF6 and PHC2. Interacts with histone H3. Interacts with MLLT3. Interacts with PHC2. Interacts (via chromodomain) with single-stranded RNA.

Its subcellular location is the nucleus. The protein localises to the chromosome. Its function is as follows. Component of a Polycomb group (PcG) multiprotein PRC1-like complex, a complex class required to maintain the transcriptionally repressive state of many genes, including Hox genes, throughout development. PcG PRC1 complex acts via chromatin remodeling and modification of histones; it mediates monoubiquitination of histone H2A 'Lys-119', rendering chromatin heritably changed in its expressibility. This chain is Chromobox protein homolog 8 (Cbx8), found in Mus musculus (Mouse).